A 62-amino-acid polypeptide reads, in one-letter code: Photosystem II reaction center protein Z (62 aa).

Helical transmembrane passes span 8-28 (AVFA…AVFA) and 41-61 (FSGA…NSSV).

The protein belongs to the PsbZ family. In terms of assembly, PSII is composed of 1 copy each of membrane proteins PsbA, PsbB, PsbC, PsbD, PsbE, PsbF, PsbH, PsbI, PsbJ, PsbK, PsbL, PsbM, PsbT, PsbY, PsbZ, Psb30/Ycf12, at least 3 peripheral proteins of the oxygen-evolving complex and a large number of cofactors. It forms dimeric complexes.

It is found in the plastid. It localises to the chloroplast thylakoid membrane. In terms of biological role, may control the interaction of photosystem II (PSII) cores with the light-harvesting antenna, regulates electron flow through the 2 photosystem reaction centers. PSII is a light-driven water plastoquinone oxidoreductase, using light energy to abstract electrons from H(2)O, generating a proton gradient subsequently used for ATP formation. The polypeptide is Photosystem II reaction center protein Z (Selaginella uncinata (Blue spike-moss)).